The following is a 94-amino-acid chain: Small ribosomal subunit protein uS19 (94 aa).

Belongs to the universal ribosomal protein uS19 family.

Functionally, protein S19 forms a complex with S13 that binds strongly to the 16S ribosomal RNA. This is Small ribosomal subunit protein uS19 from Anaplasma phagocytophilum (strain HZ).